A 188-amino-acid polypeptide reads, in one-letter code: Segregation and condensation protein B (188 aa).

The protein belongs to the ScpB family. In terms of assembly, homodimer. Homodimerization may be required to stabilize the binding of ScpA to the Smc head domains. Component of a cohesin-like complex composed of ScpA, ScpB and the Smc homodimer, in which ScpA and ScpB bind to the head domain of Smc. The presence of the three proteins is required for the association of the complex with DNA.

Its subcellular location is the cytoplasm. Its function is as follows. Participates in chromosomal partition during cell division. May act via the formation of a condensin-like complex containing Smc and ScpA that pull DNA away from mid-cell into both cell halves. In Streptococcus gordonii (strain Challis / ATCC 35105 / BCRC 15272 / CH1 / DL1 / V288), this protein is Segregation and condensation protein B.